The sequence spans 336 residues: Dihydrolipoyl dehydrogenase (336 aa).

FAD-binding positions include Glu-34–Cys-42, Lys-51, and Gly-115. Cysteines 42 and 47 form a disulfide. Residues Gly-180–Ile-184, Glu-203, Val-237, and Ser-264–Thr-267 contribute to the NAD(+) site. FAD contacts are provided by Asp-304 and Ala-312.

It belongs to the class-I pyridine nucleotide-disulfide oxidoreductase family. As to quaternary structure, homodimer. Requires FAD as cofactor.

The protein resides in the cytoplasm. The catalysed reaction is N(6)-[(R)-dihydrolipoyl]-L-lysyl-[protein] + NAD(+) = N(6)-[(R)-lipoyl]-L-lysyl-[protein] + NADH + H(+). Lipoamide dehydrogenase is a component of the alpha-ketoacid dehydrogenase complexes. The polypeptide is Dihydrolipoyl dehydrogenase (pdhD) (Acholeplasma laidlawii).